A 275-amino-acid chain; its full sequence is Large ribosomal subunit protein uL2 (275 aa).

Disordered stretches follow at residues 222 to 243 (GSVMNPTDHPHGGGEGRAPIGR) and 256 to 275 (GGKTRRKKPSDNMIVRKRKP).

This sequence belongs to the universal ribosomal protein uL2 family. Part of the 50S ribosomal subunit. Forms a bridge to the 30S subunit in the 70S ribosome.

One of the primary rRNA binding proteins. Required for association of the 30S and 50S subunits to form the 70S ribosome, for tRNA binding and peptide bond formation. It has been suggested to have peptidyltransferase activity; this is somewhat controversial. Makes several contacts with the 16S rRNA in the 70S ribosome. The sequence is that of Large ribosomal subunit protein uL2 from Syntrophomonas wolfei subsp. wolfei (strain DSM 2245B / Goettingen).